The primary structure comprises 180 residues: MDWPHSLLFLLAISIFLAPSHPRNTKGKRKGQGRPSPLAPGPHQVPLDLVSRVKPYARMEEYERNLGEMVAQLRNSSEPAKKKCEVNLQLWLSNKRSLSPWGYSINHDPSRIPADLPEARCLCLGCVNPFTMQEDRSMVSVPVFSQVPVRRRLCPQPPRPGPCRQRVVMETIAVGCTCIF.

An N-terminal signal peptide occupies residues 1–22 (MDWPHSLLFLLAISIFLAPSHP). A disordered region spans residues 22–44 (PRNTKGKRKGQGRPSPLAPGPHQ). Residues 23–32 (RNTKGKRKGQ) show a composition bias toward basic residues. Asn75 carries an N-linked (GlcNAc...) asparagine glycan. 2 disulfides stabilise this stretch: Cys121–Cys176 and Cys126–Cys178.

Belongs to the IL-17 family.

It is found in the secreted. In terms of biological role, stimulates the release of tumor necrosis factor alpha and IL-1-beta from the monocytic cell line THP-1. The sequence is that of Interleukin-17B (Il17b) from Mus musculus (Mouse).